The primary structure comprises 215 residues: Phosphoribosylglycinamide formyltransferase (215 aa).

(6R)-10-formyltetrahydrofolate-binding positions include Arg-74, 99 to 102, and Asn-116; that span reads MRIL. His-118 serves as the catalytic Proton donor.

This sequence belongs to the GART family.

It carries out the reaction N(1)-(5-phospho-beta-D-ribosyl)glycinamide + (6R)-10-formyltetrahydrofolate = N(2)-formyl-N(1)-(5-phospho-beta-D-ribosyl)glycinamide + (6S)-5,6,7,8-tetrahydrofolate + H(+). It functions in the pathway purine metabolism; IMP biosynthesis via de novo pathway; N(2)-formyl-N(1)-(5-phospho-D-ribosyl)glycinamide from N(1)-(5-phospho-D-ribosyl)glycinamide (10-formyl THF route): step 1/1. Catalyzes the transfer of a formyl group from 10-formyltetrahydrofolate to 5-phospho-ribosyl-glycinamide (GAR), producing 5-phospho-ribosyl-N-formylglycinamide (FGAR) and tetrahydrofolate. The polypeptide is Phosphoribosylglycinamide formyltransferase (Mycobacterium tuberculosis (strain CDC 1551 / Oshkosh)).